Reading from the N-terminus, the 263-residue chain is Purine nucleoside phosphorylase SAS1121 (263 aa).

Zn(2+)-binding residues include His-79, Cys-124, and His-141.

It belongs to the purine nucleoside phosphorylase YfiH/LACC1 family. As to quaternary structure, homodimer. The cofactor is Cu(2+). It depends on Zn(2+) as a cofactor.

The enzyme catalyses adenosine + phosphate = alpha-D-ribose 1-phosphate + adenine. It catalyses the reaction S-methyl-5'-thioadenosine + phosphate = 5-(methylsulfanyl)-alpha-D-ribose 1-phosphate + adenine. It carries out the reaction inosine + phosphate = alpha-D-ribose 1-phosphate + hypoxanthine. The catalysed reaction is adenosine + H2O + H(+) = inosine + NH4(+). Its function is as follows. Purine nucleoside enzyme that catalyzes the phosphorolysis of adenosine and inosine nucleosides, yielding D-ribose 1-phosphate and the respective free bases, adenine and hypoxanthine. Also catalyzes the phosphorolysis of S-methyl-5'-thioadenosine into adenine and S-methyl-5-thio-alpha-D-ribose 1-phosphate. Also has adenosine deaminase activity. The polypeptide is Purine nucleoside phosphorylase SAS1121 (Staphylococcus aureus (strain MSSA476)).